The following is a 461-amino-acid chain: Glutamate-gated chloride channel alpha (461 aa).

The N-terminal stretch at 1 to 20 is a signal peptide; sequence MATWIVGKLIIASLILGIQA. The Extracellular segment spans residues 21 to 275; the sequence is QQARTKSQDI…TTIQLKREFS (255 aa). Positions 98, 117, and 182 each coordinate L-glutamate. Cys191 and Cys205 form a disulfide bridge. Ser211 is a binding site for L-glutamate. N-linked (GlcNAc...) asparagine glycosylation is present at Asn246. Cys252 and Cys263 are disulfide-bonded. A helical transmembrane segment spans residues 276–298; it reads FYLLQLYIPSCMLVIVSWVSFWF. Over 299-303 the chain is Cytoplasmic; it reads DRTAI. A helical transmembrane segment spans residues 304 to 325; that stretch reads PARVTLGVTTLLTMTAQSAGIN. Over 326 to 332 the chain is Extracellular; it reads SQLPPVS. A helical transmembrane segment spans residues 333-353; it reads YIKAIDVWIGACMTFIFCALL. Residues 354–432 are Cytoplasmic-facing; it reads EFALVNHIAN…EWNDISKRVD (79 aa). Residues 433-454 form a helical membrane-spanning segment; sequence LISRALFPVLFFVFNILYWSRF. Residues 455-461 are Extracellular-facing; it reads GQQNVLF.

It belongs to the ligand-gated ion channel (TC 1.A.9) family. Glutamate-gated chloride channel (TC 1.A.9.4) subfamily. Pentamer. Homooligomer, forms functional heterooligomers with glc-2.

It is found in the postsynaptic cell membrane. It localises to the cell membrane. Functionally, glutamate-gated chloride channel subunit; channel properties depend on the subunit composition. Glutamate binding triggers a rapidly reversible current in heteromeric channels formed by glc-1 and glc-2, while the anti-helmintic drug ivermectin and other avermectins trigger a permanently open channel configuration. Channels containing only glc-1 are activated by ivermectin, but not by glutamate alone (in vitro). The heteromeric channel formed by glc-1 and glc-2 is also activated by ibotenate, and it is blocked by picrotoxin and flufenamic acid. Plays a role in the regulation of locomotor behavior. This is Glutamate-gated chloride channel alpha from Caenorhabditis elegans.